The primary structure comprises 309 residues: Acetyl-coenzyme A carboxylase carboxyl transferase subunit beta (309 aa).

One can recognise a CoA carboxyltransferase N-terminal domain in the interval 27 to 296 (LWKKCPKCGA…PGTEAPIEFE (270 aa)). The Zn(2+) site is built by C31, C34, C50, and C53. Residues 31–53 (CPKCGAFLYKPELEKNLDVCPKC) form a C4-type zinc finger. The disordered stretch occupies residues 288–309 (GTEAPIEFEVTEKPDVDEPEGQ).

It belongs to the AccD/PCCB family. As to quaternary structure, acetyl-CoA carboxylase is a heterohexamer composed of biotin carboxyl carrier protein (AccB), biotin carboxylase (AccC) and two subunits each of ACCase subunit alpha (AccA) and ACCase subunit beta (AccD). Zn(2+) is required as a cofactor.

The protein localises to the cytoplasm. It catalyses the reaction N(6)-carboxybiotinyl-L-lysyl-[protein] + acetyl-CoA = N(6)-biotinyl-L-lysyl-[protein] + malonyl-CoA. The protein operates within lipid metabolism; malonyl-CoA biosynthesis; malonyl-CoA from acetyl-CoA: step 1/1. Component of the acetyl coenzyme A carboxylase (ACC) complex. Biotin carboxylase (BC) catalyzes the carboxylation of biotin on its carrier protein (BCCP) and then the CO(2) group is transferred by the transcarboxylase to acetyl-CoA to form malonyl-CoA. In Marinobacter nauticus (strain ATCC 700491 / DSM 11845 / VT8) (Marinobacter aquaeolei), this protein is Acetyl-coenzyme A carboxylase carboxyl transferase subunit beta.